Reading from the N-terminus, the 471-residue chain is Adenosylhomocysteinase (471 aa).

Substrate is bound by residues T60, D135, and E196. Residue 197-199 (TTT) participates in NAD(+) binding. Substrate contacts are provided by K226 and D230. Residues N231, 260-265 (GYGDVG), E283, N318, 339-341 (IGH), and N387 contribute to the NAD(+) site.

Belongs to the adenosylhomocysteinase family. Requires NAD(+) as cofactor.

Its subcellular location is the cytoplasm. It carries out the reaction S-adenosyl-L-homocysteine + H2O = L-homocysteine + adenosine. The protein operates within amino-acid biosynthesis; L-homocysteine biosynthesis; L-homocysteine from S-adenosyl-L-homocysteine: step 1/1. In terms of biological role, may play a key role in the regulation of the intracellular concentration of adenosylhomocysteine. The protein is Adenosylhomocysteinase of Chlorobium phaeobacteroides (strain DSM 266 / SMG 266 / 2430).